The following is a 216-amino-acid chain: Phosphoribosylaminoimidazole-succinocarboxamide synthase (216 aa).

It belongs to the SAICAR synthetase family.

It catalyses the reaction 5-amino-1-(5-phospho-D-ribosyl)imidazole-4-carboxylate + L-aspartate + ATP = (2S)-2-[5-amino-1-(5-phospho-beta-D-ribosyl)imidazole-4-carboxamido]succinate + ADP + phosphate + 2 H(+). The protein operates within purine metabolism; IMP biosynthesis via de novo pathway; 5-amino-1-(5-phospho-D-ribosyl)imidazole-4-carboxamide from 5-amino-1-(5-phospho-D-ribosyl)imidazole-4-carboxylate: step 1/2. This is Phosphoribosylaminoimidazole-succinocarboxamide synthase (purC) from Aquifex aeolicus (strain VF5).